An 82-amino-acid chain; its full sequence is Sulfur carrier protein TusA (82 aa).

Cys20 acts as the Cysteine persulfide intermediate in catalysis.

This sequence belongs to the sulfur carrier protein TusA family.

The protein localises to the cytoplasm. Sulfur carrier protein which probably makes part of a sulfur-relay system. In Aeromonas hydrophila subsp. hydrophila (strain ATCC 7966 / DSM 30187 / BCRC 13018 / CCUG 14551 / JCM 1027 / KCTC 2358 / NCIMB 9240 / NCTC 8049), this protein is Sulfur carrier protein TusA.